Reading from the N-terminus, the 408-residue chain is Elongation factor Tu, chloroplastic (408 aa).

The 205-residue stretch at 10 to 214 (KPHVNIGTIG…AVDSYIPTPK (205 aa)) folds into the tr-type G domain. The G1 stretch occupies residues 19–26 (GHVDHGKT). 19–26 (GHVDHGKT) serves as a coordination point for GTP. Residue Thr-26 participates in Mg(2+) binding. The interval 60 to 64 (GITIN) is G2. Residues 81-84 (DCPG) form a G3 region. GTP is bound by residues 81–85 (DCPGH) and 136–139 (NKED). The G4 stretch occupies residues 136 to 139 (NKED). Residues 174–176 (SAL) are G5.

Belongs to the TRAFAC class translation factor GTPase superfamily. Classic translation factor GTPase family. EF-Tu/EF-1A subfamily.

Its subcellular location is the plastid. It is found in the chloroplast. It carries out the reaction GTP + H2O = GDP + phosphate + H(+). Functionally, GTP hydrolase that promotes the GTP-dependent binding of aminoacyl-tRNA to the A-site of ribosomes during protein biosynthesis. The polypeptide is Elongation factor Tu, chloroplastic (tufA) (Chara connivens (Convergent stonewort)).